The chain runs to 558 residues: uncharacterized protein (558 aa).

In terms of domain architecture, DhaL spans 7-206 (SNFIDMLRLG…FACFLEGMLS (200 aa)).

This is an uncharacterized protein from Mycoplasma pneumoniae (strain ATCC 29342 / M129 / Subtype 1) (Mycoplasmoides pneumoniae).